A 478-amino-acid polypeptide reads, in one-letter code: MKTLPTLLLLCVALCSAYPLDGASRDADTTNMDLLQQYLENYYNLEKDVKQFVKRKDSSPVVKKIQEMQKFLGLEVTGKLDSNTLEVIRKPRCGVPDVGHFSTFPGTPKWTKTHLTYRIVNYTPDLPRDAVDAAIEKALKVWEEVTPLTFSRKYEGEADIMISFGVREHGDFIPFDGPGNVLAHAYAPGPGINGDAHFDDDEQWTKDTTGTNLFLVAAHELGHSLGLFHSANPEALMYPVYNAFTDLARFRLSQDDVDGIQSLYGPAPASPDNSGVPMEPVPPGSGTPVMCDPDLSFDAISTLRGEILFFKDRYFWRKSLRILEPEFHLISSFWPSLPSAVDAAYEVISRDTVFIFKGTQFWAIRGNEVQAGYPRSIHTLGFPSTIRKIDAAISDKERKKTYFFVEDKYWRFDEKRQSLEPGFPRHIAEDFPGINPKIDAVFEAFGFFYFFSGSSQSEFDPNAKKVTHVLKSNSWFQC.

A signal peptide spans 1–17 (MKTLPTLLLLCVALCSA). Residues 18–100 (YPLDGASRDA…PRCGVPDVGH (83 aa)) constitute a propeptide, activation peptide. The Cysteine switch motif lies at 91–98 (PRCGVPDV). Residue cysteine 93 participates in Zn(2+) binding. Residues aspartate 125 and aspartate 159 each contribute to the Ca(2+) site. Positions 169 and 171 each coordinate Zn(2+). Ca(2+) contacts are provided by aspartate 176, glycine 177, glycine 179, and valine 181. Histidine 184 contributes to the Zn(2+) binding site. Residues glycine 191, asparagine 193, and aspartate 195 each contribute to the Ca(2+) site. Position 197 (histidine 197) interacts with Zn(2+). Ca(2+) is bound by residues aspartate 199, aspartate 200, and glutamate 202. Histidine 219 is a binding site for Zn(2+). The active site involves glutamate 220. The Zn(2+) site is built by histidine 223 and histidine 229. Hemopexin repeat units lie at residues 288-337 (PVMC…WPSL), 338-384 (PSAV…GFPS), 386-434 (IRKI…FPGI), and 435-478 (NPKI…WFQC). A disulfide bond links cysteine 291 and cysteine 478. Aspartate 298 is a Ca(2+) binding site. Aspartate 390 and aspartate 439 together coordinate Ca(2+).

This sequence belongs to the peptidase M10A family. Requires Ca(2+) as cofactor. Zn(2+) is required as a cofactor.

The protein resides in the secreted. Its subcellular location is the extracellular space. It is found in the extracellular matrix. The catalysed reaction is Preferential cleavage where P1', P2' and P3' are hydrophobic residues.. Its function is as follows. Metalloproteinase with a rather broad substrate specificity that can degrade fibronectin, laminin, gelatins of type I, III, IV, and V; collagens III, IV, X, and IX, and cartilage proteoglycans. Activates different molecules including growth factors, plasminogen or other matrix metalloproteinases such as MMP9. Once released into the extracellular matrix (ECM), the inactive pro-enzyme is activated by the plasmin cascade signaling pathway. Also acts intracellularly. For example, in dopaminergic neurons, gets activated by the serine protease HTRA2 upon stress and plays a pivotal role in DA neuronal degeneration by mediating microglial activation and alpha-synuclein/SNCA cleavage. In addition, plays a role in immune response and possesses antiviral activity against various viruses. Mechanistically, translocates from the cytoplasm into the cell nucleus upon virus infection to influence NF-kappa-B activities. This Oryctolagus cuniculus (Rabbit) protein is Stromelysin-1 (MMP3).